The sequence spans 128 residues: Holo-[acyl-carrier-protein] synthase (128 aa).

Mg(2+) is bound by residues D8 and E60.

It belongs to the P-Pant transferase superfamily. AcpS family. Mg(2+) serves as cofactor.

Its subcellular location is the cytoplasm. It catalyses the reaction apo-[ACP] + CoA = holo-[ACP] + adenosine 3',5'-bisphosphate + H(+). Transfers the 4'-phosphopantetheine moiety from coenzyme A to a Ser of acyl-carrier-protein. This chain is Holo-[acyl-carrier-protein] synthase, found in Anaeromyxobacter dehalogenans (strain 2CP-C).